We begin with the raw amino-acid sequence, 257 residues long: Hydroxyacylglutathione hydrolase (257 aa).

Residues H54, H56, D58, H59, H113, D137, and H175 each contribute to the Zn(2+) site.

The protein belongs to the metallo-beta-lactamase superfamily. Glyoxalase II family. Monomer. It depends on Zn(2+) as a cofactor.

It carries out the reaction an S-(2-hydroxyacyl)glutathione + H2O = a 2-hydroxy carboxylate + glutathione + H(+). The protein operates within secondary metabolite metabolism; methylglyoxal degradation; (R)-lactate from methylglyoxal: step 2/2. In terms of biological role, thiolesterase that catalyzes the hydrolysis of S-D-lactoyl-glutathione to form glutathione and D-lactic acid. In Rippkaea orientalis (strain PCC 8801 / RF-1) (Cyanothece sp. (strain PCC 8801)), this protein is Hydroxyacylglutathione hydrolase.